The following is a 400-amino-acid chain: Acetylornithine aminotransferase (400 aa).

Pyridoxal 5'-phosphate is bound by residues 102–103 (GA) and Phe135. Arg138 contributes to the N(2)-acetyl-L-ornithine binding site. Pyridoxal 5'-phosphate is bound at residue 220–223 (DEVQ). At Lys249 the chain carries N6-(pyridoxal phosphate)lysine. Residue Ser276 coordinates N(2)-acetyl-L-ornithine. Thr277 contributes to the pyridoxal 5'-phosphate binding site.

It belongs to the class-III pyridoxal-phosphate-dependent aminotransferase family. ArgD subfamily. In terms of assembly, homodimer. The cofactor is pyridoxal 5'-phosphate.

It is found in the cytoplasm. The enzyme catalyses N(2)-acetyl-L-ornithine + 2-oxoglutarate = N-acetyl-L-glutamate 5-semialdehyde + L-glutamate. It functions in the pathway amino-acid biosynthesis; L-arginine biosynthesis; N(2)-acetyl-L-ornithine from L-glutamate: step 4/4. This is Acetylornithine aminotransferase from Gloeobacter violaceus (strain ATCC 29082 / PCC 7421).